A 360-amino-acid chain; its full sequence is Phospho-N-acetylmuramoyl-pentapeptide-transferase (360 aa).

Helical transmembrane passes span 27–47 (GAFMTALIFGFLFGRPLINVL), 71–91 (TPTMGGLLIVGALLTSTLLWA), 93–113 (WDNPFVWMVLFVTLAYALIGF), 134–154 (LALGVIIAVIAALWASYNHPA), 168–188 (TLINLGLLYVPFAICVIVGSA), 199–219 (GLAIMPAMIAASTLGVIAYAV), 239–259 (ILIFTAALFGAGLGFLWYNAP), 262–282 (AVFMGDTGSLALGGALGAIAV), 288–308 (LVLAIVGGLFVVEALSVIIQV), and 337–357 (TIVIRFWIISLILAMIGLATL).

Belongs to the glycosyltransferase 4 family. MraY subfamily. It depends on Mg(2+) as a cofactor.

It localises to the cell inner membrane. The enzyme catalyses UDP-N-acetyl-alpha-D-muramoyl-L-alanyl-gamma-D-glutamyl-meso-2,6-diaminopimeloyl-D-alanyl-D-alanine + di-trans,octa-cis-undecaprenyl phosphate = di-trans,octa-cis-undecaprenyl diphospho-N-acetyl-alpha-D-muramoyl-L-alanyl-D-glutamyl-meso-2,6-diaminopimeloyl-D-alanyl-D-alanine + UMP. It participates in cell wall biogenesis; peptidoglycan biosynthesis. Its function is as follows. Catalyzes the initial step of the lipid cycle reactions in the biosynthesis of the cell wall peptidoglycan: transfers peptidoglycan precursor phospho-MurNAc-pentapeptide from UDP-MurNAc-pentapeptide onto the lipid carrier undecaprenyl phosphate, yielding undecaprenyl-pyrophosphoryl-MurNAc-pentapeptide, known as lipid I. This Ruegeria pomeroyi (strain ATCC 700808 / DSM 15171 / DSS-3) (Silicibacter pomeroyi) protein is Phospho-N-acetylmuramoyl-pentapeptide-transferase.